A 508-amino-acid polypeptide reads, in one-letter code: General transcription factor IIF subunit 1 (508 aa).

Residue alanine 2 is modified to N-acetylalanine. Threonine 156 bears the Phosphothreonine mark. The interval 177–448 is disordered; the sequence is MQQRRLKDQD…SSGDVQVTED (272 aa). Phosphoserine is present on residues serine 217, serine 218, serine 221, and serine 224. The segment covering 232-251 has biased composition (basic residues); the sequence is SKAKKKAPVTKAGRKKKKKK. 2 stretches are compositionally biased toward acidic residues: residues 255 to 270 and 303 to 325; these read DEAF…EGQE and EQSE…EEEE. Phosphothreonine is present on threonine 331. Over residues 343–355 the composition is skewed to acidic residues; sequence DDSDSSEESDIDS. The segment covering 364–374 has biased composition (basic residues); sequence AKKKTPPKRER. A phosphoserine mark is found at serine 377, serine 380, serine 381, and serine 385. The span at 378–388 shows a compositional bias: polar residues; it reads GGSSKGTSRPG. Threonine 389 is modified (phosphothreonine). Residues 389 to 406 show a composition bias toward low complexity; the sequence is TPSAEAASTSSTLRAAAS. Phosphoserine is present on serine 391. An N6-acetyllysine modification is found at lysine 407. The segment covering 428-443 has biased composition (polar residues); the sequence is GPQSLSGKSTPSSGDV. 3 positions are modified to phosphoserine: serine 431, serine 433, and serine 436. Phosphothreonine is present on threonine 437. Serine 440 is subject to Phosphoserine.

This sequence belongs to the TFIIF alpha subunit family. Heterodimer of an alpha and a beta subunit. Interacts with GTF2F2, CTDP1, TAF6/TAFII80 and URI1. Interacts with GTF2B (via C-terminus and preferentially via acetylated form); this interaction prevents binding of GTF2B to GTF2F2. Part of TBP-based Pol II pre-initiation complex (PIC), in which Pol II core assembles with general transcription factors and other specific initiation factors including GTF2E1, GTF2E2, GTF2F1, GTF2F2, TCEA1, ERCC2, ERCC3, GTF2H2, GTF2H3, GTF2H4, GTF2H5, GTF2A1, GTF2A2, GTF2B and TBP; this large multi-subunit PIC complex mediates DNA unwinding and targets Pol II core to the transcription start site where the first phosphodiester bond forms. Post-translationally, phosphorylated on Ser and other residues by TAF1 and casein kinase II-like kinases.

The protein resides in the nucleus. TFIIF is a general transcription initiation factor that binds to RNA polymerase II and helps to recruit it to the initiation complex in collaboration with TFIIB. It promotes transcription elongation. In Rattus norvegicus (Rat), this protein is General transcription factor IIF subunit 1 (Gtf2f1).